The sequence spans 453 residues: Asparagine--tRNA ligase (453 aa).

Belongs to the class-II aminoacyl-tRNA synthetase family. As to quaternary structure, homodimer.

It localises to the cytoplasm. It carries out the reaction tRNA(Asn) + L-asparagine + ATP = L-asparaginyl-tRNA(Asn) + AMP + diphosphate + H(+). The polypeptide is Asparagine--tRNA ligase (Malacoplasma penetrans (strain HF-2) (Mycoplasma penetrans)).